We begin with the raw amino-acid sequence, 422 residues long: uncharacterized protein (422 aa).

The protein belongs to the N(4)/N(6)-methyltransferase family.

The enzyme catalyses a 2'-deoxyadenosine in DNA + S-adenosyl-L-methionine = an N(6)-methyl-2'-deoxyadenosine in DNA + S-adenosyl-L-homocysteine + H(+). This is an uncharacterized protein from Mycoplasma pneumoniae (strain ATCC 29342 / M129 / Subtype 1) (Mycoplasmoides pneumoniae).